Here is a 120-residue protein sequence, read N- to C-terminus: Small ribosomal subunit protein uS19 (120 aa).

It belongs to the universal ribosomal protein uS19 family.

The chain is Small ribosomal subunit protein uS19 (RPS15) from Naegleria gruberi (Amoeba).